The sequence spans 317 residues: 4-diphosphocytidyl-2-C-methyl-D-erythritol kinase (317 aa).

The active site involves Lys11. 99-109 (PVAAGLAGGST) contacts ATP. The active site involves Asp141.

It belongs to the GHMP kinase family. IspE subfamily.

It catalyses the reaction 4-CDP-2-C-methyl-D-erythritol + ATP = 4-CDP-2-C-methyl-D-erythritol 2-phosphate + ADP + H(+). It functions in the pathway isoprenoid biosynthesis; isopentenyl diphosphate biosynthesis via DXP pathway; isopentenyl diphosphate from 1-deoxy-D-xylulose 5-phosphate: step 3/6. Functionally, catalyzes the phosphorylation of the position 2 hydroxy group of 4-diphosphocytidyl-2C-methyl-D-erythritol. The sequence is that of 4-diphosphocytidyl-2-C-methyl-D-erythritol kinase from Trichormus variabilis (strain ATCC 29413 / PCC 7937) (Anabaena variabilis).